The sequence spans 256 residues: Imidazole glycerol phosphate synthase subunit HisF (256 aa).

Catalysis depends on residues Asp-11 and Asp-130.

Belongs to the HisA/HisF family. Heterodimer of HisH and HisF.

The protein resides in the cytoplasm. The enzyme catalyses 5-[(5-phospho-1-deoxy-D-ribulos-1-ylimino)methylamino]-1-(5-phospho-beta-D-ribosyl)imidazole-4-carboxamide + L-glutamine = D-erythro-1-(imidazol-4-yl)glycerol 3-phosphate + 5-amino-1-(5-phospho-beta-D-ribosyl)imidazole-4-carboxamide + L-glutamate + H(+). It participates in amino-acid biosynthesis; L-histidine biosynthesis; L-histidine from 5-phospho-alpha-D-ribose 1-diphosphate: step 5/9. IGPS catalyzes the conversion of PRFAR and glutamine to IGP, AICAR and glutamate. The HisF subunit catalyzes the cyclization activity that produces IGP and AICAR from PRFAR using the ammonia provided by the HisH subunit. The chain is Imidazole glycerol phosphate synthase subunit HisF from Cupriavidus taiwanensis (strain DSM 17343 / BCRC 17206 / CCUG 44338 / CIP 107171 / LMG 19424 / R1) (Ralstonia taiwanensis (strain LMG 19424)).